Reading from the N-terminus, the 3164-residue chain is Protein eyes shut homolog (3164 aa).

The first 21 residues, 1–21 (MTDKSIIILSLMVFHSSFING), serve as a signal peptide directing secretion. N-linked (GlcNAc...) asparagine glycans are attached at residues Asn-42, Asn-105, Asn-117, and Asn-166. EGF-like domains are found at residues 170–212 (KQQF…KYCQ), 213–254 (ELDA…KNCS), and 256–292 (IIGQCQPHVCFHGNCSNITSNSFICECDEQFSGPFCE). 9 cysteine pairs are disulfide-bonded: Cys-174–Cys-189, Cys-183–Cys-200, Cys-202–Cys-211, Cys-217–Cys-228, Cys-222–Cys-242, Cys-244–Cys-253, Cys-260–Cys-270, Cys-265–Cys-280, and Cys-282–Cys-291. N-linked (GlcNAc...) asparagine glycosylation is found at Asn-225, Asn-252, Asn-269, and Asn-272. Asn-311 and Asn-343 each carry an N-linked (GlcNAc...) asparagine glycan. 2 consecutive EGF-like domains span residues 332–368 (DVSECSLVPCQNGTDCIQISNDVMCICSPIFTDLLCK) and 370–406 (IQTSCESFSLRNNATCKKWEKDYHCSCISGFTEKNCE). 5 disulfides stabilise this stretch: Cys-336-Cys-347, Cys-341-Cys-356, Cys-358-Cys-367, Cys-374-Cys-385, and Cys-396-Cys-405. A glycan (N-linked (GlcNAc...) asparagine) is linked at Asn-382. Residues Asn-506, Asn-521, and Asn-566 are each glycosylated (N-linked (GlcNAc...) asparagine). The EGF-like 6 domain occupies 567–602 (TTDDQENECQHEAICKDEINRPRCSCSLSYIGRLCV). 2 cysteine pairs are disulfide-bonded: Cys-575–Cys-590 and Cys-592–Cys-601. 2 N-linked (GlcNAc...) asparagine glycosylation sites follow: Asn-611 and Asn-654. The EGF-like 7 domain maps to 643-679 (DTEDCKSVSCKNGTTSIHLRGYFFCKCVPGFKGTQRE). Disulfide bonds link Cys-652/Cys-667, Cys-685/Cys-696, Cys-690/Cys-705, Cys-707/Cys-719, Cys-737/Cys-748, and Cys-742/Cys-757. Residues 681–720 (DIDECASHPCKNGATCIDQPGNYFCQCVPPFKVVDGFSCL) enclose the EGF-like 8; calcium-binding domain. Residues 733–769 (DIDDCILNACEHNSTCKDLHLSYQCVCLSGWEGNFSE) enclose the EGF-like 9; calcium-binding domain. Asn-745, Asn-766, Asn-782, Asn-783, and Asn-805 each carry an N-linked (GlcNAc...) asparagine glycan. The region spanning 771–807 (ESNECKMNPCKNNSTCIDLYKSYRCECTSGWTGQNCS) is the EGF-like 10; calcium-binding domain. 33 disulfide bridges follow: Cys-775–Cys-786, Cys-780–Cys-795, Cys-797–Cys-806, Cys-813–Cys-824, Cys-818–Cys-835, Cys-837–Cys-846, Cys-853–Cys-866, Cys-860–Cys-876, Cys-878–Cys-887, Cys-894–Cys-905, Cys-899–Cys-914, Cys-916–Cys-925, Cys-932–Cys-943, Cys-937–Cys-952, Cys-954–Cys-963, Cys-970–Cys-981, Cys-975–Cys-990, Cys-992–Cys-1001, Cys-1008–Cys-1019, Cys-1013–Cys-1028, Cys-1030–Cys-1039, Cys-1046–Cys-1056, Cys-1051–Cys-1065, Cys-1067–Cys-1076, Cys-1083–Cys-1094, Cys-1088–Cys-1103, Cys-1105–Cys-1114, Cys-1121–Cys-1137, Cys-1131–Cys-1147, Cys-1149–Cys-1158, Cys-1165–Cys-1176, Cys-1170–Cys-1185, and Cys-1187–Cys-1196. 3 EGF-like domains span residues 809–847 (EINECDSDPCMNGGLCHESTIPGQFVCLCPPLYTGRFCH), 849–888 (RYNPCDLLHNPCRNNSTCLALVDGNQHCICREEFEGKNCE), and 890–926 (DVKECLFLSCQDYGDCEDMVNNFRCICRPGFSGSLCE). Asn-862 and Asn-863 each carry an N-linked (GlcNAc...) asparagine glycan. An EGF-like 14; calcium-binding domain is found at 928 to 964 (EINECSSEPCKNNGTCVDLTNRFFCNCEPGYHGPFCE). An N-linked (GlcNAc...) asparagine glycan is attached at Asn-940. The region spanning 966–1002 (DVNKCKISPCLDEENCVYRTDGYNCLCAPGYTGINCE) is the EGF-like 15 domain. Residues 1004 to 1040 (NLDECLSEPCLHDGVCIDGINHYTCDCKSGFFGTHCE) enclose the EGF-like 16; calcium-binding domain. 3 consecutive EGF-like domains span residues 1042–1077 (NANDCLSNPCLHGRCTELINEYPCSCDADGTSTQCK), 1079–1115 (KINDCTSIPCMNEGFCQKSAHGFTCICPRGYTGAYCE), and 1117–1159 (SIDN…QFCE). The 37-residue stretch at 1161-1197 (NINECSSSPCLHGADCEDHINGYVCKCQPGWSGHHCE) folds into the EGF-like 20; calcium-binding domain. Residues Asn-1509, Asn-1522, Asn-1906, Asn-1941, Asn-1960, and Asn-2033 are each glycosylated (N-linked (GlcNAc...) asparagine). Positions 1883-2063 (FSCVRYYGDS…AVKNYHINNC (181 aa)) constitute a Laminin G-like 1 domain. Intrachain disulfides connect Cys-2037-Cys-2063, Cys-2103-Cys-2114, Cys-2108-Cys-2128, and Cys-2130-Cys-2139. Residues 2099-2140 (APSVCQQDVCHNGGTCHPIFLSRGIVSFQCDCPLHFTGRFCE) enclose the EGF-like 21 domain. The 195-residue stretch at 2145–2339 (LFFPSFNGNS…NIENCHVPWC (195 aa)) folds into the Laminin G-like 2 domain. Residues Asn-2170, Asn-2185, and Asn-2228 are each glycosylated (N-linked (GlcNAc...) asparagine). 6 cysteine pairs are disulfide-bonded: Cys-2308–Cys-2339, Cys-2339–Cys-2350, Cys-2344–Cys-2359, Cys-2375–Cys-2386, Cys-2380–Cys-2396, and Cys-2398–Cys-2407. 2 EGF-like domains span residues 2335 to 2368 (HVPWCAHHLCRNNGTCISDNENLFCECPRLYSGK) and 2371 to 2408 (QFASCENNPCGNGATCVPKSGTDIVCLCPYGRSGPLCT). N-linked (GlcNAc...) asparagine glycosylation is present at Asn-2347. N-linked (GlcNAc...) asparagine glycosylation is found at Asn-2412, Asn-2453, Asn-2484, Asn-2506, and Asn-2532. One can recognise a Laminin G-like 3 domain in the interval 2419-2609 (SGTDAFGYTS…PNAGRSVGQC (191 aa)). 3 cysteine pairs are disulfide-bonded: Cys-2576–Cys-2609, Cys-2614–Cys-2625, and Cys-2619–Cys-2634. EGF-like domains follow at residues 2610–2646 (HASPCSLMKCGNGGTCIESGTSVYCNCTTGWKGAFCT) and 2648–2689 (TVST…IYCE). Asn-2635 is a glycosylation site (N-linked (GlcNAc...) asparagine). Cystine bridges form between Cys-2636-Cys-2645, Cys-2652-Cys-2668, Cys-2662-Cys-2677, and Cys-2679-Cys-2688. In terms of domain architecture, Laminin G-like 4 spans 2717-2895 (DPSFRSNELS…AKGGSNVGDC (179 aa)). Asn-2775, Asn-2800, and Asn-2824 each carry an N-linked (GlcNAc...) asparagine glycan. 4 cysteine pairs are disulfide-bonded: Cys-2868/Cys-2895, Cys-2900/Cys-2911, Cys-2905/Cys-2920, and Cys-2922/Cys-2931. EGF-like domains follow at residues 2896-2932 (DGTACGYNTCRNGGECTVNGTTFSCRCLPDWAGNTCN) and 2933-2970 (QSVYCLNNLCLHQSLCIPNQSFSYSCLCTLGWVGRYCE). Asn-2914 carries an N-linked (GlcNAc...) asparagine glycan. Asn-2932 carries N-linked (GlcNAc...) asparagine glycosylation. Cystine bridges form between Cys-2937–Cys-2948, Cys-2942–Cys-2958, and Cys-2960–Cys-2969. An N-linked (GlcNAc...) asparagine glycan is attached at Asn-2951. Asn-2971, Asn-3006, Asn-3036, Asn-3057, Asn-3073, and Asn-3082 each carry an N-linked (GlcNAc...) asparagine glycan. One can recognise a Laminin G-like 5 domain in the interval 2975–3164 (FSTAKFMGNS…YDGDEQNEVT (190 aa)).

This sequence belongs to the EYS family.

It is found in the cell projection. The protein localises to the cilium. It localises to the photoreceptor outer segment. Its subcellular location is the cytoplasm. The protein resides in the cytoskeleton. It is found in the cilium axoneme. The protein localises to the microtubule organizing center. It localises to the centrosome. Its subcellular location is the secreted. The protein resides in the extracellular space. It is found in the extracellular matrix. The protein localises to the interphotoreceptor matrix. Its function is as follows. Required to maintain the integrity of photoreceptor cells. Specifically required for normal morphology of the photoreceptor ciliary pocket, and might thus facilitate protein trafficking between the photoreceptor inner and outer segments via the transition zone. This Pongo abelii (Sumatran orangutan) protein is Protein eyes shut homolog (EYS).